A 325-amino-acid polypeptide reads, in one-letter code: Beta-ketoacyl-[acyl-carrier-protein] synthase III (325 aa).

Active-site residues include cysteine 116 and histidine 252. The segment at glutamine 253 to arginine 257 is ACP-binding. Residue asparagine 282 is part of the active site.

It belongs to the thiolase-like superfamily. FabH family. As to quaternary structure, homodimer.

It localises to the cytoplasm. The enzyme catalyses malonyl-[ACP] + acetyl-CoA + H(+) = 3-oxobutanoyl-[ACP] + CO2 + CoA. It participates in lipid metabolism; fatty acid biosynthesis. Its function is as follows. Catalyzes the condensation reaction of fatty acid synthesis by the addition to an acyl acceptor of two carbons from malonyl-ACP. Catalyzes the first condensation reaction which initiates fatty acid synthesis and may therefore play a role in governing the total rate of fatty acid production. Possesses both acetoacetyl-ACP synthase and acetyl transacylase activities. Its substrate specificity determines the biosynthesis of branched-chain and/or straight-chain of fatty acids. The chain is Beta-ketoacyl-[acyl-carrier-protein] synthase III from Xanthomonas campestris pv. campestris (strain ATCC 33913 / DSM 3586 / NCPPB 528 / LMG 568 / P 25).